A 678-amino-acid chain; its full sequence is Penicillin-binding protein activator LpoA (678 aa).

The signal sequence occupies residues Met1 to Gly26. A lipid anchor (N-palmitoyl cysteine) is attached at Cys27. Cys27 carries the S-diacylglycerol cysteine lipid modification. Composition is skewed to low complexity over residues Ala300–Gln310, Gln330–Ala340, and Thr513–Phe528. Disordered stretches follow at residues Ala300–Ala340 and Ala496–Phe528.

The protein belongs to the LpoA family. As to quaternary structure, interacts with PBP1a.

The protein localises to the cell outer membrane. In terms of biological role, regulator of peptidoglycan synthesis that is essential for the function of penicillin-binding protein 1A (PBP1a). The chain is Penicillin-binding protein activator LpoA from Shigella flexneri serotype 5b (strain 8401).